The following is a 36-amino-acid chain: Pancreatic polypeptide (36 aa).

The residue at position 36 (Y36) is a Tyrosine amide.

Belongs to the NPY family.

It is found in the secreted. Hormone secreted by pancreatic cells that acts as a regulator of pancreatic and gastrointestinal functions. The sequence is that of Pancreatic polypeptide (PPY) from Anser anser anser (Western greylag goose).